Here is a 137-residue protein sequence, read N- to C-terminus: Glutamate mutase sigma subunit (137 aa).

The B12-binding domain maps to 3-137; it reads KKTIVLGVIG…ADLKEDLNIK (135 aa). Adenosylcob(III)alamin is bound by residues 13–17, H16, 61–63, and 93–97; these read SDCHA, SSL, and NIVVG.

It belongs to the methylaspartate mutase GlmS subunit family. In terms of assembly, heterotetramer composed of 2 epsilon subunits (GlmE) and 2 sigma subunits (GlmS). GlmE exists as a homodimer and GlmS as a monomer. Adenosylcob(III)alamin serves as cofactor.

The catalysed reaction is (2S,3S)-3-methyl-L-aspartate = L-glutamate. It participates in amino-acid degradation; L-glutamate degradation via mesaconate pathway; acetate and pyruvate from L-glutamate: step 1/4. Its function is as follows. Catalyzes the carbon skeleton rearrangement of L-glutamate to L-threo-3-methylaspartate ((2S,3S)-3-methylaspartate). In Clostridium tetani (strain Massachusetts / E88), this protein is Glutamate mutase sigma subunit.